Reading from the N-terminus, the 197-residue chain is 3-isopropylmalate dehydratase small subunit (197 aa).

It belongs to the LeuD family. LeuD type 1 subfamily. Heterodimer of LeuC and LeuD.

The enzyme catalyses (2R,3S)-3-isopropylmalate = (2S)-2-isopropylmalate. Its pathway is amino-acid biosynthesis; L-leucine biosynthesis; L-leucine from 3-methyl-2-oxobutanoate: step 2/4. Catalyzes the isomerization between 2-isopropylmalate and 3-isopropylmalate, via the formation of 2-isopropylmaleate. This is 3-isopropylmalate dehydratase small subunit from Acidothermus cellulolyticus (strain ATCC 43068 / DSM 8971 / 11B).